Here is a 375-residue protein sequence, read N- to C-terminus: Phosphate acyltransferase (375 aa).

A disordered region spans residues 354 to 375 (AQDDATSADADAPGDSETGSTN). Residues 356 to 368 (DDATSADADAPGD) are compositionally biased toward low complexity.

This sequence belongs to the PlsX family. Homodimer. Probably interacts with PlsY.

The protein localises to the cytoplasm. The enzyme catalyses a fatty acyl-[ACP] + phosphate = an acyl phosphate + holo-[ACP]. It functions in the pathway lipid metabolism; phospholipid metabolism. Functionally, catalyzes the reversible formation of acyl-phosphate (acyl-PO(4)) from acyl-[acyl-carrier-protein] (acyl-ACP). This enzyme utilizes acyl-ACP as fatty acyl donor, but not acyl-CoA. The polypeptide is Phosphate acyltransferase (Ruegeria sp. (strain TM1040) (Silicibacter sp.)).